The primary structure comprises 1099 residues: Protein DDB_G0287365 (1099 aa).

An N-terminal signal peptide occupies residues 1–24 (MMSFNLILILIIFLILIQNYVIDG). The G8 domain occupies 47–174 (KSWKKLKLPI…TKTTWTKLIS (128 aa)). Residues Asn62, Asn137, Asn664, Asn764, and Asn858 are each glycosylated (N-linked (GlcNAc...) asparagine).

Belongs to the CEMIP family.

The polypeptide is Protein DDB_G0287365 (Dictyostelium discoideum (Social amoeba)).